A 186-amino-acid polypeptide reads, in one-letter code: Ribosome-recycling factor (186 aa).

Belongs to the RRF family.

It localises to the cytoplasm. In terms of biological role, responsible for the release of ribosomes from messenger RNA at the termination of protein biosynthesis. May increase the efficiency of translation by recycling ribosomes from one round of translation to another. The chain is Ribosome-recycling factor from Chlorobium phaeovibrioides (strain DSM 265 / 1930) (Prosthecochloris vibrioformis (strain DSM 265)).